A 297-amino-acid chain; its full sequence is Formamidopyrimidine-DNA glycosylase (297 aa).

The Schiff-base intermediate with DNA role is filled by proline 2. Residue glutamate 3 is the Proton donor of the active site. The active-site Proton donor; for beta-elimination activity is lysine 58. Residues histidine 106, arginine 125, and arginine 168 each coordinate DNA. An FPG-type zinc finger spans residues 259–295 (RVYDREGLACTARGCRGVVRRVVQSGRSTFFCEVCQP). The Proton donor; for delta-elimination activity role is filled by arginine 285.

It belongs to the FPG family. Monomer. It depends on Zn(2+) as a cofactor.

It carries out the reaction Hydrolysis of DNA containing ring-opened 7-methylguanine residues, releasing 2,6-diamino-4-hydroxy-5-(N-methyl)formamidopyrimidine.. It catalyses the reaction 2'-deoxyribonucleotide-(2'-deoxyribose 5'-phosphate)-2'-deoxyribonucleotide-DNA = a 3'-end 2'-deoxyribonucleotide-(2,3-dehydro-2,3-deoxyribose 5'-phosphate)-DNA + a 5'-end 5'-phospho-2'-deoxyribonucleoside-DNA + H(+). Its function is as follows. Involved in base excision repair of DNA damaged by oxidation or by mutagenic agents. Acts as a DNA glycosylase that recognizes and removes damaged bases. Has a preference for oxidized purines, such as 7,8-dihydro-8-oxoguanine (8-oxoG). Has AP (apurinic/apyrimidinic) lyase activity and introduces nicks in the DNA strand. Cleaves the DNA backbone by beta-delta elimination to generate a single-strand break at the site of the removed base with both 3'- and 5'-phosphates. This Methylobacterium nodulans (strain LMG 21967 / CNCM I-2342 / ORS 2060) protein is Formamidopyrimidine-DNA glycosylase.